A 246-amino-acid polypeptide reads, in one-letter code: Probable transcriptional regulatory protein APJL_1171 (246 aa).

The protein belongs to the TACO1 family.

Its subcellular location is the cytoplasm. The protein is Probable transcriptional regulatory protein APJL_1171 of Actinobacillus pleuropneumoniae serotype 3 (strain JL03).